The following is a 579-amino-acid chain: O-fucosyltransferase 24 (579 aa).

The helical; Signal-anchor for type II membrane protein transmembrane segment at 58 to 78 threads the bilayer; that stretch reads LWAFSLFLLSILGISLRLGLC. N-linked (GlcNAc...) asparagine glycosylation occurs at Asn133. 355 to 357 provides a ligand contact to substrate; it reads HLR. 3 N-linked (GlcNAc...) asparagine glycosylation sites follow: Asn528, Asn573, and Asn576.

It belongs to the glycosyltransferase GT106 family.

It localises to the membrane. It functions in the pathway glycan metabolism. The sequence is that of O-fucosyltransferase 24 from Arabidopsis thaliana (Mouse-ear cress).